The sequence spans 103 residues: UPF0473 protein SGO_2040 (103 aa).

It belongs to the UPF0473 family.

This is UPF0473 protein SGO_2040 from Streptococcus gordonii (strain Challis / ATCC 35105 / BCRC 15272 / CH1 / DL1 / V288).